The chain runs to 390 residues: Tryptophan synthase beta chain 2 (390 aa).

The residue at position 83 (lysine 83) is an N6-(pyridoxal phosphate)lysine.

This sequence belongs to the TrpB family. Tetramer of two alpha and two beta chains. It depends on pyridoxal 5'-phosphate as a cofactor.

The enzyme catalyses (1S,2R)-1-C-(indol-3-yl)glycerol 3-phosphate + L-serine = D-glyceraldehyde 3-phosphate + L-tryptophan + H2O. The protein operates within amino-acid biosynthesis; L-tryptophan biosynthesis; L-tryptophan from chorismate: step 5/5. Functionally, the beta subunit is responsible for the synthesis of L-tryptophan from indole and L-serine. The sequence is that of Tryptophan synthase beta chain 2 (trpB2) from Methanothermobacter marburgensis (strain ATCC BAA-927 / DSM 2133 / JCM 14651 / NBRC 100331 / OCM 82 / Marburg) (Methanobacterium thermoautotrophicum).